The following is a 206-amino-acid chain: High frequency lysogenization protein HflD homolog (206 aa).

This sequence belongs to the HflD family.

The protein localises to the cytoplasm. Its subcellular location is the cell inner membrane. This chain is High frequency lysogenization protein HflD homolog, found in Pseudomonas syringae pv. syringae (strain B728a).